Reading from the N-terminus, the 72-residue chain is Translation initiation factor IF-1 (72 aa).

An S1-like domain is found at 2 to 72 (AKEDVIEVEG…TRGRITYRYK (71 aa)). The residue at position 60 (tyrosine 60) is a Phosphotyrosine.

The protein belongs to the IF-1 family. Component of the 30S ribosomal translation pre-initiation complex which assembles on the 30S ribosome in the order IF-2 and IF-3, IF-1 and N-formylmethionyl-tRNA(fMet); mRNA recruitment can occur at any time during PIC assembly.

It localises to the cytoplasm. In terms of biological role, one of the essential components for the initiation of protein synthesis. Stabilizes the binding of IF-2 and IF-3 on the 30S subunit to which N-formylmethionyl-tRNA(fMet) subsequently binds. Helps modulate mRNA selection, yielding the 30S pre-initiation complex (PIC). Upon addition of the 50S ribosomal subunit IF-1, IF-2 and IF-3 are released leaving the mature 70S translation initiation complex. This chain is Translation initiation factor IF-1, found in Halalkalibacterium halodurans (strain ATCC BAA-125 / DSM 18197 / FERM 7344 / JCM 9153 / C-125) (Bacillus halodurans).